Reading from the N-terminus, the 228-residue chain is Urease accessory protein UreF (228 aa).

The protein belongs to the UreF family. UreD, UreF and UreG form a complex that acts as a GTP-hydrolysis-dependent molecular chaperone, activating the urease apoprotein by helping to assemble the nickel containing metallocenter of UreC. The UreE protein probably delivers the nickel.

It is found in the cytoplasm. Functionally, required for maturation of urease via the functional incorporation of the urease nickel metallocenter. In Lachnoclostridium phytofermentans (strain ATCC 700394 / DSM 18823 / ISDg) (Clostridium phytofermentans), this protein is Urease accessory protein UreF.